We begin with the raw amino-acid sequence, 100 residues long: Aspartyl/glutamyl-tRNA(Asn/Gln) amidotransferase subunit C (100 aa).

The protein belongs to the GatC family. As to quaternary structure, heterotrimer of A, B and C subunits.

The enzyme catalyses L-glutamyl-tRNA(Gln) + L-glutamine + ATP + H2O = L-glutaminyl-tRNA(Gln) + L-glutamate + ADP + phosphate + H(+). It catalyses the reaction L-aspartyl-tRNA(Asn) + L-glutamine + ATP + H2O = L-asparaginyl-tRNA(Asn) + L-glutamate + ADP + phosphate + 2 H(+). Functionally, allows the formation of correctly charged Asn-tRNA(Asn) or Gln-tRNA(Gln) through the transamidation of misacylated Asp-tRNA(Asn) or Glu-tRNA(Gln) in organisms which lack either or both of asparaginyl-tRNA or glutaminyl-tRNA synthetases. The reaction takes place in the presence of glutamine and ATP through an activated phospho-Asp-tRNA(Asn) or phospho-Glu-tRNA(Gln). This chain is Aspartyl/glutamyl-tRNA(Asn/Gln) amidotransferase subunit C, found in Rickettsia peacockii (strain Rustic).